The sequence spans 220 residues: Dual specificity protein phosphatase 19 (220 aa).

Met-1 carries the post-translational modification N-acetylmethionine. The Tyrosine-protein phosphatase domain maps to 64 to 205 (QVGVIKPWLL…LRTYQVGKES (142 aa)). Residue Cys-149 is the Phosphocysteine intermediate of the active site.

Belongs to the protein-tyrosine phosphatase family. Non-receptor class dual specificity subfamily.

It catalyses the reaction O-phospho-L-tyrosyl-[protein] + H2O = L-tyrosyl-[protein] + phosphate. The enzyme catalyses O-phospho-L-seryl-[protein] + H2O = L-seryl-[protein] + phosphate. It carries out the reaction O-phospho-L-threonyl-[protein] + H2O = L-threonyl-[protein] + phosphate. Phosphatase activity is enhanced by Ca(2+) and Mn(2+). Functionally, has a dual specificity toward Ser/Thr and Tyr-containing proteins. The chain is Dual specificity protein phosphatase 19 from Mus musculus (Mouse).